A 305-amino-acid chain; its full sequence is Lipoyl synthase (305 aa).

Residues cysteine 41, cysteine 46, cysteine 52, cysteine 68, cysteine 72, cysteine 75, and serine 281 each contribute to the [4Fe-4S] cluster site. The Radical SAM core domain maps to 54-270 (GARRTATFMI…RKVAMDKGFK (217 aa)). Over residues 283–298 (HADEQVNEAAKEKQRQ) the composition is skewed to basic and acidic residues. Positions 283 to 305 (HADEQVNEAAKEKQRQGEAQLNS) are disordered.

It belongs to the radical SAM superfamily. Lipoyl synthase family. The cofactor is [4Fe-4S] cluster.

The protein localises to the cytoplasm. It carries out the reaction [[Fe-S] cluster scaffold protein carrying a second [4Fe-4S](2+) cluster] + N(6)-octanoyl-L-lysyl-[protein] + 2 oxidized [2Fe-2S]-[ferredoxin] + 2 S-adenosyl-L-methionine + 4 H(+) = [[Fe-S] cluster scaffold protein] + N(6)-[(R)-dihydrolipoyl]-L-lysyl-[protein] + 4 Fe(3+) + 2 hydrogen sulfide + 2 5'-deoxyadenosine + 2 L-methionine + 2 reduced [2Fe-2S]-[ferredoxin]. The protein operates within protein modification; protein lipoylation via endogenous pathway; protein N(6)-(lipoyl)lysine from octanoyl-[acyl-carrier-protein]. Catalyzes the radical-mediated insertion of two sulfur atoms into the C-6 and C-8 positions of the octanoyl moiety bound to the lipoyl domains of lipoate-dependent enzymes, thereby converting the octanoylated domains into lipoylated derivatives. This is Lipoyl synthase from Staphylococcus aureus (strain bovine RF122 / ET3-1).